A 195-amino-acid polypeptide reads, in one-letter code: MTQNIRPLPQFKYHPKPLETGAFEQDKTVECDCCEQQTSVYYSGPFYCVDEVEHLCPWCIADGSAAEKFAGSFQDDASIEGVEFEYDEEDEFAGIKNTYPDEMLKELVERTPGYHGWQQEFWLAHCGDFCVFIGYVGWNDIKDRLDEFANLEEDCENFGIRNSDLAKCLQKGGHCQGYLFRCLHCGKLRLWGDFS.

The protein belongs to the UPF0167 family.

This chain is UPF0167 protein CbrC (cbrC), found in Escherichia coli (strain K12).